Reading from the N-terminus, the 248-residue chain is Probable septum site-determining protein MinC (248 aa).

Residues 115-144 (PTAVSPPPPPPPPARAEPAPPAARPAPGRM) form a disordered region. Residues 118 to 138 (VSPPPPPPPPARAEPAPPAAR) show a composition bias toward pro residues.

This sequence belongs to the MinC family. In terms of assembly, interacts with MinD and FtsZ.

Cell division inhibitor that blocks the formation of polar Z ring septums. Rapidly oscillates between the poles of the cell to destabilize FtsZ filaments that have formed before they mature into polar Z rings. Prevents FtsZ polymerization. The protein is Probable septum site-determining protein MinC of Xanthomonas euvesicatoria pv. vesicatoria (strain 85-10) (Xanthomonas campestris pv. vesicatoria).